Reading from the N-terminus, the 532-residue chain is Cytochrome P450 99A2 (532 aa).

Residues 30–50 (SAATLTLVSLLTLPILLALLT) traverse the membrane as a helical segment. Residue cysteine 468 coordinates heme. The chain crosses the membrane as a helical span at residues 473 to 493 (FGMVLLELIVARLLYYFDWSL).

It belongs to the cytochrome P450 family. Heme is required as a cofactor.

It is found in the membrane. Involved in momilactone phytoalexins biosynthesis. Participates in the biosynthetic steps between 9-beta-pimara-7,15-diene and 3-beta-hydroxy-9-beta-pimara-7,15-dien-19,6-beta-olide. This chain is Cytochrome P450 99A2 (CYP99A2), found in Oryza sativa subsp. japonica (Rice).